A 367-amino-acid polypeptide reads, in one-letter code: MVKTNVTIMRGGTSKGVFFHESAMPNNKNEWEPFLLDVMGSPDKRQIDGLGGGNSLTSKVAIIKKAYTSDIDVHYTFGQVSISEEKVDFKGNCGNISAAVGPFAIEEGLVKAKEPMTAVRILNTNTNKMIIAEVEVEDGQVKYDGDVTISGVPGSGSPIYLNFHDAAGSVTGHLLPTGNSSEFLDTSQGQIEVSIIDYANPLVFVEASSIGLDGTELAEEFTDLQLAQFEELRSIAAEKCGFASRFSATKLSPAVPKLAIVAKPEKYKDSTGAWHSSVEMDLHIRMMSMQKPHQALAVTGAICTTRALSVEGAIPARIAKNHSTKVRLAHSSGIIETMVEPTGIKIVRTARRIMDGTVYTHGDYQMM.

The protein belongs to the PrpF family.

The chain is Putative isomerase YraM (yraM) from Bacillus subtilis (strain 168).